The following is a 31-amino-acid chain: Cytochrome b6-f complex subunit 6 (31 aa).

The helical transmembrane segment at 4–26 (ITSYFGFLLAASTITPALFIGLS) threads the bilayer.

It belongs to the PetL family. In terms of assembly, the 4 large subunits of the cytochrome b6-f complex are cytochrome b6, subunit IV (17 kDa polypeptide, PetD), cytochrome f and the Rieske protein, while the 4 small subunits are PetG, PetL, PetM and PetN. The complex functions as a dimer.

It localises to the plastid. The protein localises to the chloroplast thylakoid membrane. Component of the cytochrome b6-f complex, which mediates electron transfer between photosystem II (PSII) and photosystem I (PSI), cyclic electron flow around PSI, and state transitions. PetL is important for photoautotrophic growth as well as for electron transfer efficiency and stability of the cytochrome b6-f complex. This is Cytochrome b6-f complex subunit 6 from Buxus microphylla (Littleleaf boxwood).